Consider the following 396-residue polypeptide: Protein DDI1 homolog 1 (396 aa).

The 81-residue stretch at 1–81 (MLITVYCVRR…VVLLQKDNVG (81 aa)) folds into the Ubiquitin-like domain. The disordered stretch occupies residues 82–130 (PRAPGRAPNQPRVDFSGIAVPGTSSSRPQHPGQQQQRTPAAQRSQGLAS). Positions 103–128 (GTSSSRPQHPGQQQQRTPAAQRSQGL) are enriched in polar residues. Residue Asp-260 is part of the active site. Positions 374–396 (SGQDESSDKEITHSVMDSGRKEH) are disordered. Positions 379–396 (SSDKEITHSVMDSGRKEH) are enriched in basic and acidic residues.

It belongs to the DDI1 family.

Inhibited by the proteinase inhibitors amprenavir, indinavir, lopinavir, isovaleryl pepstatin, ritonavir and saquinavir. Probable aspartic protease. Seems to act as a proteasomal shuttle which links the proteasome and replication fork proteins like RTF2. Required, with DDI2, for cellular survival following replication stress. Together or redudantly with DDI2, removes RTF2 from stalled forks to allow cell cycle progression after replication stress and maintains genome integrity. This chain is Protein DDI1 homolog 1 (DDI1), found in Homo sapiens (Human).